The primary structure comprises 185 residues: Elongation factor P (185 aa).

This sequence belongs to the elongation factor P family.

The protein resides in the cytoplasm. It functions in the pathway protein biosynthesis; polypeptide chain elongation. Functionally, involved in peptide bond synthesis. Stimulates efficient translation and peptide-bond synthesis on native or reconstituted 70S ribosomes in vitro. Probably functions indirectly by altering the affinity of the ribosome for aminoacyl-tRNA, thus increasing their reactivity as acceptors for peptidyl transferase. This chain is Elongation factor P (efp), found in Synechococcus elongatus (strain ATCC 33912 / PCC 7942 / FACHB-805) (Anacystis nidulans R2).